A 286-amino-acid polypeptide reads, in one-letter code: Pyridoxal kinase PdxY (286 aa).

Substrate-binding positions include S9 and 44-45 (TQ). ATP-binding positions include D111, A143, E148, K181, and 208–211 (RPLV). D223 is a substrate binding site.

Belongs to the pyridoxine kinase family. PdxY subfamily. As to quaternary structure, homodimer. Mg(2+) is required as a cofactor.

It catalyses the reaction pyridoxal + ATP = pyridoxal 5'-phosphate + ADP + H(+). It functions in the pathway cofactor metabolism; pyridoxal 5'-phosphate salvage; pyridoxal 5'-phosphate from pyridoxal: step 1/1. Functionally, pyridoxal kinase involved in the salvage pathway of pyridoxal 5'-phosphate (PLP). Catalyzes the phosphorylation of pyridoxal to PLP. In Salmonella choleraesuis (strain SC-B67), this protein is Pyridoxal kinase PdxY.